A 111-amino-acid chain; its full sequence is Cell division protein FtsB (111 aa).

Residues 1-3 (MRL) are Cytoplasmic-facing. A helical transmembrane segment spans residues 4 to 21 (ITLFLLLLLLAIQYPLWL). At 22–111 (GKGGWLRVWD…PAALQPNHRH (90 aa)) the chain is on the periplasmic side. Positions 28–64 (RVWDMQKQVASQNQRNAELKQRNLKLEGEVKDLKEGT) form a coiled coil. The segment at 90–111 (PAPKTSETPLPPPAALQPNHRH) is disordered.

This sequence belongs to the FtsB family. Part of a complex composed of FtsB, FtsL and FtsQ.

The protein localises to the cell inner membrane. In terms of biological role, essential cell division protein. May link together the upstream cell division proteins, which are predominantly cytoplasmic, with the downstream cell division proteins, which are predominantly periplasmic. The protein is Cell division protein FtsB of Ralstonia nicotianae (strain ATCC BAA-1114 / GMI1000) (Ralstonia solanacearum).